A 240-amino-acid polypeptide reads, in one-letter code: Oxygen-insensitive NADPH nitroreductase (240 aa).

FMN is bound by residues 11-15, serine 39, glutamine 67, 128-131, and 167-169; these read HRSIR, YIGG, and KPR.

The protein belongs to the flavin oxidoreductase frp family. In terms of assembly, homodimer. FMN is required as a cofactor.

Its function is as follows. Catalyzes the reduction of nitroaromatic compounds using NADPH. Has a broad electron acceptor specificity. Reduces nitrofurazone by a ping-pong bi-bi mechanism possibly to generate a two-electron transfer product. Major oxygen-insensitive nitroreductase in E.coli. The chain is Oxygen-insensitive NADPH nitroreductase (nfsA) from Escherichia coli (strain K12).